The sequence spans 467 residues: Chromosomal replication initiator protein DnaA (467 aa).

The tract at residues 1 to 79 is domain I, interacts with DnaA modulators; sequence MTELDQFWPA…GELPVELRLG (79 aa). Residues 79–129 are domain II; that stretch reads GAPTARPAAPVAGNSQPKAKEPAKAAASAPAAPSPAKQAAVKAIGGSHEST. The interval 84–126 is disordered; sequence RPAAPVAGNSQPKAKEPAKAAASAPAAPSPAKQAAVKAIGGSH. A compositionally biased stretch (low complexity) spans 102 to 121; that stretch reads KAAASAPAAPSPAKQAAVKA. The interval 130–347 is domain III, AAA+ region; the sequence is RLNPSFTFDT…GALKRVVAYA (218 aa). Residues Gly-175, Gly-177, Lys-178, and Thr-179 each contribute to the ATP site. The tract at residues 348–467 is domain IV, binds dsDNA; sequence RFTSQNITLE…YEALLSMLRN (120 aa).

The protein belongs to the DnaA family. Oligomerizes as a right-handed, spiral filament on DNA at oriC.

It localises to the cytoplasm. Its function is as follows. Plays an essential role in the initiation and regulation of chromosomal replication. ATP-DnaA binds to the origin of replication (oriC) to initiate formation of the DNA replication initiation complex once per cell cycle. Binds the DnaA box (a 9 base pair repeat at the origin) and separates the double-stranded (ds)DNA. Forms a right-handed helical filament on oriC DNA; dsDNA binds to the exterior of the filament while single-stranded (ss)DNA is stabiized in the filament's interior. The ATP-DnaA-oriC complex binds and stabilizes one strand of the AT-rich DNA unwinding element (DUE), permitting loading of DNA polymerase. After initiation quickly degrades to an ADP-DnaA complex that is not apt for DNA replication. Binds acidic phospholipids. The protein is Chromosomal replication initiator protein DnaA of Chromobacterium violaceum (strain ATCC 12472 / DSM 30191 / JCM 1249 / CCUG 213 / NBRC 12614 / NCIMB 9131 / NCTC 9757 / MK).